A 178-amino-acid polypeptide reads, in one-letter code: Cytochrome b6-f complex iron-sulfur subunit (178 aa).

A helical transmembrane segment spans residues 20–42 (LLTFGTATGVALGALYPVANYFM). Residues 71–161 (NHPAGDRSLV…IDVEDDKVFV (91 aa)) form the Rieske domain. Residues Cys107, His109, Cys125, and His128 each coordinate [2Fe-2S] cluster. Cys112 and Cys127 form a disulfide bridge.

This sequence belongs to the Rieske iron-sulfur protein family. As to quaternary structure, the 4 large subunits of the cytochrome b6-f complex are cytochrome b6, subunit IV (17 kDa polypeptide, PetD), cytochrome f and the Rieske protein, while the 4 small subunits are PetG, PetL, PetM and PetN. The complex functions as a dimer. Requires [2Fe-2S] cluster as cofactor.

The protein resides in the cellular thylakoid membrane. It catalyses the reaction 2 oxidized [plastocyanin] + a plastoquinol + 2 H(+)(in) = 2 reduced [plastocyanin] + a plastoquinone + 4 H(+)(out). Its function is as follows. Component of the cytochrome b6-f complex, which mediates electron transfer between photosystem II (PSII) and photosystem I (PSI), cyclic electron flow around PSI, and state transitions. The chain is Cytochrome b6-f complex iron-sulfur subunit from Prochlorococcus marinus (strain MIT 9211).